The following is a 172-amino-acid chain: Crossover junction endodeoxyribonuclease RuvC (172 aa).

Active-site residues include Asp-7, Glu-68, and Asp-141. Mg(2+)-binding residues include Asp-7, Glu-68, and Asp-141.

Belongs to the RuvC family. As to quaternary structure, homodimer which binds Holliday junction (HJ) DNA. The HJ becomes 2-fold symmetrical on binding to RuvC with unstacked arms; it has a different conformation from HJ DNA in complex with RuvA. In the full resolvosome a probable DNA-RuvA(4)-RuvB(12)-RuvC(2) complex forms which resolves the HJ. Mg(2+) is required as a cofactor.

It localises to the cytoplasm. The catalysed reaction is Endonucleolytic cleavage at a junction such as a reciprocal single-stranded crossover between two homologous DNA duplexes (Holliday junction).. Functionally, the RuvA-RuvB-RuvC complex processes Holliday junction (HJ) DNA during genetic recombination and DNA repair. Endonuclease that resolves HJ intermediates. Cleaves cruciform DNA by making single-stranded nicks across the HJ at symmetrical positions within the homologous arms, yielding a 5'-phosphate and a 3'-hydroxyl group; requires a central core of homology in the junction. The consensus cleavage sequence is 5'-(A/T)TT(C/G)-3'. Cleavage occurs on the 3'-side of the TT dinucleotide at the point of strand exchange. HJ branch migration catalyzed by RuvA-RuvB allows RuvC to scan DNA until it finds its consensus sequence, where it cleaves and resolves the cruciform DNA. This chain is Crossover junction endodeoxyribonuclease RuvC, found in Frankia casuarinae (strain DSM 45818 / CECT 9043 / HFP020203 / CcI3).